Reading from the N-terminus, the 180-residue chain is Cell division protein ZapC (180 aa).

Belongs to the ZapC family. As to quaternary structure, interacts directly with FtsZ.

The protein localises to the cytoplasm. Its function is as follows. Contributes to the efficiency of the cell division process by stabilizing the polymeric form of the cell division protein FtsZ. Acts by promoting interactions between FtsZ protofilaments and suppressing the GTPase activity of FtsZ. The sequence is that of Cell division protein ZapC from Vibrio cholerae serotype O1 (strain ATCC 39315 / El Tor Inaba N16961).